A 70-amino-acid chain; its full sequence is Small ribosomal subunit protein bS21 (70 aa).

The protein belongs to the bacterial ribosomal protein bS21 family.

This is Small ribosomal subunit protein bS21 from Helicobacter pylori (strain P12).